The following is a 242-amino-acid chain: 1-(5-phosphoribosyl)-5-[(5-phosphoribosylamino)methylideneamino] imidazole-4-carboxamide isomerase (242 aa).

D8 (proton acceptor) is an active-site residue. D129 acts as the Proton donor in catalysis.

It belongs to the HisA/HisF family.

It localises to the cytoplasm. The enzyme catalyses 1-(5-phospho-beta-D-ribosyl)-5-[(5-phospho-beta-D-ribosylamino)methylideneamino]imidazole-4-carboxamide = 5-[(5-phospho-1-deoxy-D-ribulos-1-ylimino)methylamino]-1-(5-phospho-beta-D-ribosyl)imidazole-4-carboxamide. Its pathway is amino-acid biosynthesis; L-histidine biosynthesis; L-histidine from 5-phospho-alpha-D-ribose 1-diphosphate: step 4/9. The polypeptide is 1-(5-phosphoribosyl)-5-[(5-phosphoribosylamino)methylideneamino] imidazole-4-carboxamide isomerase (Dictyoglomus thermophilum (strain ATCC 35947 / DSM 3960 / H-6-12)).